A 286-amino-acid chain; its full sequence is Nucleotide-binding protein VC0395_A2112/VC395_2645 (286 aa).

8-15 (GQSGAGKS) is a binding site for ATP. A GTP-binding site is contributed by 56–59 (DIRN).

The protein belongs to the RapZ-like family.

In terms of biological role, displays ATPase and GTPase activities. In Vibrio cholerae serotype O1 (strain ATCC 39541 / Classical Ogawa 395 / O395), this protein is Nucleotide-binding protein VC0395_A2112/VC395_2645.